The following is a 615-amino-acid chain: NADH-quinone oxidoreductase subunit L (615 aa).

Helical transmembrane passes span 1–21, 32–52, 79–99, 113–133, 136–156, 168–188, 247–267, 279–299, 327–347, 372–392, 410–430, 457–477, 491–511, 536–556, and 594–614; these read MNIIFLIILFPLIGFLFLSLI, IIGISSIFVSLIITFFYITGF, LILDGLSLSMLAMILGIGLLI, YSRFFAYTNLFIASMSLLVLA, FLFMYLGWEIVSICSYLLIGF, LKAFVFTRISDVFLIISMFLI, TPVSALIHAATMVTAGVYLIA, ILYLISLIGIITIFISSFSAL, AWTAAIVHLIVHAIFKALLFL, CPLLYVSFLVGGASLVSFPLI, GYFNLFLIGLFCSFLTSIYTF, LLILLFFSTMFGYFIIRLPLF, FLYEIISSFISFLGIFIAYHI, LNGWYFDFFYKILFIHPYLFI, and YISTMFVGINLFFILVLCSFL.

The protein belongs to the complex I subunit 5 family. In terms of assembly, composed of 13 different subunits. Subunits NuoA, H, J, K, L, M, N constitute the membrane sector of the complex.

The protein localises to the cell membrane. The enzyme catalyses a quinone + NADH + 5 H(+)(in) = a quinol + NAD(+) + 4 H(+)(out). Functionally, NDH-1 shuttles electrons from NADH, via FMN and iron-sulfur (Fe-S) centers, to quinones in the respiratory chain. Couples the redox reaction to proton translocation (for every two electrons transferred, four hydrogen ions are translocated across the cytoplasmic membrane), and thus conserves the redox energy in a proton gradient. The polypeptide is NADH-quinone oxidoreductase subunit L (nuoL) (Buchnera aphidicola subsp. Schizaphis graminum (strain Sg)).